A 371-amino-acid polypeptide reads, in one-letter code: Probable acetylxylan esterase A (371 aa).

The first 19 residues, 1–19 (MRALSVFVALFSFLALSSA), serve as a signal peptide directing secretion. The catalytic stretch occupies residues 32–304 (GSLQQVTNFG…GEQDMEWFGF (273 aa)). Residue serine 149 is the Charge relay system of the active site. Asparagine 191 carries N-linked (GlcNAc...) asparagine glycosylation. The interval 305–335 (TGGSSSTTTTATTPPTTSTTTSSGGSSTSTG) is disordered. The tract at residues 305–336 (TGGSSSTTTTATTPPTTSTTTSSGGSSTSTGV) is ser/Thr-rich linker. Over residues 307–335 (GSSSTTTTATTPPTTSTTTSSGGSSTSTG) the composition is skewed to low complexity. The CBM1 domain occupies 335–371 (GVAEHWGQCGGNGWTGPTACASGYTCTVINEWYSQCL).

This sequence belongs to the carbohydrate esterase 1 (CE1) family. AxeA subfamily. As to quaternary structure, monomer.

Its subcellular location is the secreted. It carries out the reaction Deacetylation of xylans and xylo-oligosaccharides.. The protein operates within glycan degradation; xylan degradation. Its function is as follows. Acetylxylan esterase involved in the hydrolysis of xylan, a major structural heterogeneous polysaccharide found in plant biomass representing the second most abundant polysaccharide in the biosphere, after cellulose. Degrades acetylated xylans by cleaving acetyl side groups from the hetero-xylan backbone. In Aspergillus fumigatus (strain ATCC MYA-4609 / CBS 101355 / FGSC A1100 / Af293) (Neosartorya fumigata), this protein is Probable acetylxylan esterase A (axeA).